The sequence spans 81 residues: Small ribosomal subunit protein bS18 (81 aa).

Belongs to the bacterial ribosomal protein bS18 family. As to quaternary structure, part of the 30S ribosomal subunit. Forms a tight heterodimer with protein bS6.

Functionally, binds as a heterodimer with protein bS6 to the central domain of the 16S rRNA, where it helps stabilize the platform of the 30S subunit. The protein is Small ribosomal subunit protein bS18 of Chlamydia trachomatis serovar L2 (strain ATCC VR-902B / DSM 19102 / 434/Bu).